The sequence spans 180 residues: Type-1 fimbrial protein subunit (180 aa).

An N-terminal signal peptide occupies residues 1–22 (MKKVLLPLAALVLSATASNAMA). A disulfide bridge links C38 with C78.

It belongs to the fimbrial protein family.

Its subcellular location is the fimbrium. Its function is as follows. Fimbriae (also called pili), polar filaments radiating from the surface of the bacterium to a length of 0.5-1.5 micrometers and numbering 100-300 per cell, enable bacteria to colonize the epithelium of specific host organs. In Serratia marcescens, this protein is Type-1 fimbrial protein subunit (fimA).